A 533-amino-acid chain; its full sequence is Retinoic acid receptor RXR-beta (533 aa).

Residues 1–23 (MSWAARPPFLPQRHAAGQCGPVG) are disordered. A modulating region spans residues 1–204 (MSWAARPPFL…PGGPGAGKRL (204 aa)). Position 25 is an omega-N-methylarginine (Arg25). Residues 36 to 181 (WRRRRPWLDP…GSGPPEDVKP (146 aa)) are disordered. A compositionally biased stretch (low complexity) spans 46–61 (AAAAAAAVAGGEQQTP). The segment covering 67-82 (EAGRDGMGDSGRDSRS) has biased composition (basic and acidic residues). Composition is skewed to pro residues over residues 89–109 (NPLPQGVPPPSPPGPPLPPST) and 118–131 (APPPPPMPPPPLGS). Over residues 132–143 (PFPVISSSMGSP) the composition is skewed to low complexity. A compositionally biased stretch (pro residues) spans 144–153 (GLPPPAPPGF). 2 consecutive NR C4-type zinc fingers follow at residues 205-225 (CAICGDRSSGKHYGVYSCEGC) and 241-265 (CRDNKDCTVDKRQRNRCQYCRYQKC). A DNA-binding region (nuclear receptor) is located at residues 205 to 270 (CAICGDRSSG…RYQKCLATGM (66 aa)). Residues 271–295 (KREAVQEERQRGKDKDGDGEGAGGA) form a hinge region. Over residues 276 to 288 (QEERQRGKDKDGD) the composition is skewed to basic and acidic residues. Disordered regions lie at residues 276-299 (QEERQRGKDKDGDGEGAGGAPEEM) and 313-336 (QKSDQGVEGPGGTGGSGSSPNDPV). An NR LBD domain is found at 296 to 529 (PEEMPVDRIL…TFLMEMLEAP (234 aa)). A compositionally biased stretch (gly residues) spans 320–329 (EGPGGTGGSG).

It belongs to the nuclear hormone receptor family. NR2 subfamily. As to quaternary structure, homodimer (in vitro). Heterodimer with other retinoic acid receptor family members. Binds DNA preferentially as a RAR/RXR heterodimer. Interacts with NR1H3. Interacts with AKAP13. As to expression, expressed in aortic endothelial cells (at protein level). Expressed in monocytes. Expressed in a variety of tumor cell lines.

Its subcellular location is the nucleus. The protein resides in the cytoplasm. Receptor for retinoic acid. Retinoic acid receptors bind as heterodimers to their target response elements in response to their ligands, all-trans or 9-cis retinoic acid, and regulate gene expression in various biological processes. The RAR/RXR heterodimers bind to the retinoic acid response elements (RARE). This chain is Retinoic acid receptor RXR-beta (RXRB), found in Homo sapiens (Human).